The sequence spans 82 residues: Small ribosomal subunit protein uS17 (82 aa).

Belongs to the universal ribosomal protein uS17 family. As to quaternary structure, part of the 30S ribosomal subunit.

Its function is as follows. One of the primary rRNA binding proteins, it binds specifically to the 5'-end of 16S ribosomal RNA. This is Small ribosomal subunit protein uS17 from Shewanella sp. (strain W3-18-1).